A 380-amino-acid chain; its full sequence is Chorismate synthase (380 aa).

R48 contacts NADP(+). Residues 126 to 128 (HFS), G300, 315 to 319 (KPISS), and R342 each bind FMN.

The protein belongs to the chorismate synthase family. In terms of assembly, homotetramer. Requires FMNH2 as cofactor.

It catalyses the reaction 5-O-(1-carboxyvinyl)-3-phosphoshikimate = chorismate + phosphate. Its pathway is metabolic intermediate biosynthesis; chorismate biosynthesis; chorismate from D-erythrose 4-phosphate and phosphoenolpyruvate: step 7/7. Its function is as follows. Catalyzes the anti-1,4-elimination of the C-3 phosphate and the C-6 proR hydrogen from 5-enolpyruvylshikimate-3-phosphate (EPSP) to yield chorismate, which is the branch point compound that serves as the starting substrate for the three terminal pathways of aromatic amino acid biosynthesis. This reaction introduces a second double bond into the aromatic ring system. This is Chorismate synthase from Lancefieldella parvula (strain ATCC 33793 / DSM 20469 / CCUG 32760 / JCM 10300 / KCTC 3663 / VPI 0546 / 1246) (Atopobium parvulum).